Reading from the N-terminus, the 96-residue chain is Aspartyl/glutamyl-tRNA(Asn/Gln) amidotransferase subunit C (96 aa).

Belongs to the GatC family. Heterotrimer of A, B and C subunits.

The catalysed reaction is L-glutamyl-tRNA(Gln) + L-glutamine + ATP + H2O = L-glutaminyl-tRNA(Gln) + L-glutamate + ADP + phosphate + H(+). The enzyme catalyses L-aspartyl-tRNA(Asn) + L-glutamine + ATP + H2O = L-asparaginyl-tRNA(Asn) + L-glutamate + ADP + phosphate + 2 H(+). Functionally, allows the formation of correctly charged Asn-tRNA(Asn) or Gln-tRNA(Gln) through the transamidation of misacylated Asp-tRNA(Asn) or Glu-tRNA(Gln) in organisms which lack either or both of asparaginyl-tRNA or glutaminyl-tRNA synthetases. The reaction takes place in the presence of glutamine and ATP through an activated phospho-Asp-tRNA(Asn) or phospho-Glu-tRNA(Gln). This chain is Aspartyl/glutamyl-tRNA(Asn/Gln) amidotransferase subunit C, found in Neisseria gonorrhoeae (strain ATCC 700825 / FA 1090).